Here is a 210-residue protein sequence, read N- to C-terminus: Probable membrane protein MT1774 (210 aa).

The next 2 helical transmembrane spans lie at 43-63 (AVVM…AAAA) and 165-185 (ALAA…LLAL).

The protein localises to the cell membrane. The polypeptide is Probable membrane protein MT1774 (Mycobacterium tuberculosis (strain CDC 1551 / Oshkosh)).